Consider the following 660-residue polypeptide: DNA mismatch repair protein MutL (660 aa).

The disordered stretch occupies residues 408–436 (DQTSASASVKHASRSQDENQLSEHPNLDF). Positions 425-436 (ENQLSEHPNLDF) are enriched in polar residues.

Belongs to the DNA mismatch repair MutL/HexB family.

In terms of biological role, this protein is involved in the repair of mismatches in DNA. It is required for dam-dependent methyl-directed DNA mismatch repair. May act as a 'molecular matchmaker', a protein that promotes the formation of a stable complex between two or more DNA-binding proteins in an ATP-dependent manner without itself being part of a final effector complex. This chain is DNA mismatch repair protein MutL, found in Streptococcus uberis (strain ATCC BAA-854 / 0140J).